Here is a 379-residue protein sequence, read N- to C-terminus: Neutral protease 2 homolog TRV_03208 (379 aa).

The N-terminal stretch at 1 to 19 (MKFFTALAAVGALLAPALA) is a signal peptide. The propeptide occupies 20-187 (LPTPASEEAS…DYFSKSLDKR (168 aa)). 2 disulfide bridges follow: C193-C263 and C270-C288. Residue N221 is glycosylated (N-linked (GlcNAc...) asparagine). Position 312 (H312) interacts with Zn(2+). The active site involves E313. 2 residues coordinate Zn(2+): H316 and D327.

The protein belongs to the peptidase M35 family. Requires Zn(2+) as cofactor.

The protein resides in the secreted. It catalyses the reaction Preferential cleavage of bonds with hydrophobic residues in P1'. Also 3-Asn-|-Gln-4 and 8-Gly-|-Ser-9 bonds in insulin B chain.. Functionally, secreted metalloproteinase that allows assimilation of proteinaceous substrates. Shows high activities on basic nuclear substrates such as histone and protamine. May be involved in virulence. This is Neutral protease 2 homolog TRV_03208 from Trichophyton verrucosum (strain HKI 0517).